The following is an 89-amino-acid chain: Dynein light chain 2, cytoplasmic (89 aa).

This sequence belongs to the dynein light chain family.

Its subcellular location is the cytoplasm. It is found in the cytoskeleton. Acts as a non-catalytic accessory component of a dynein complex. The chain is Dynein light chain 2, cytoplasmic (Cdlc2) from Drosophila melanogaster (Fruit fly).